We begin with the raw amino-acid sequence, 180 residues long: Shikimate kinase (180 aa).

ATP is bound at residue 14-19 (GAGKST). Ser-18 provides a ligand contact to Mg(2+). Asp-36, Arg-60, and Gly-82 together coordinate substrate. Position 120 (Arg-120) interacts with ATP. Arg-140 contributes to the substrate binding site. Residue Gln-157 participates in ATP binding.

Belongs to the shikimate kinase family. Monomer. It depends on Mg(2+) as a cofactor.

It is found in the cytoplasm. The enzyme catalyses shikimate + ATP = 3-phosphoshikimate + ADP + H(+). The protein operates within metabolic intermediate biosynthesis; chorismate biosynthesis; chorismate from D-erythrose 4-phosphate and phosphoenolpyruvate: step 5/7. In terms of biological role, catalyzes the specific phosphorylation of the 3-hydroxyl group of shikimic acid using ATP as a cosubstrate. In Haemophilus influenzae (strain PittEE), this protein is Shikimate kinase.